Here is a 141-residue protein sequence, read N- to C-terminus: 4-hydroxybenzoyl-CoA thioesterase (141 aa).

Residue D17 is part of the active site. Residues W47, 59-61 (TPI), and K90 contribute to the substrate site.

It belongs to the 4-hydroxybenzoyl-CoA thioesterase family. In terms of assembly, homotetramer.

It carries out the reaction 4-hydroxybenzoyl-CoA + H2O = 4-hydroxybenzoate + CoA + H(+). Its pathway is xenobiotic degradation; 4-chlorobenzoate degradation; 4-hydroxybenzoate from 4-chlorobenzoate: step 3/3. With respect to regulation, unaffected by EDTA, Mg(2+), Mn(2+), Fe(2+), Ca(2+), Co(2+) and Zn(2+). Its function is as follows. Hydrolyzes 4-hydroxybenzoate-CoA, and to a lesser extent benzoyl-CoA and 4-chlorobenzoate-CoA. Not active against aliphatic acyl-CoA thioesters, including palmitoyl-CoA, hexanoyl-CoA and acetyl-CoA. The protein is 4-hydroxybenzoyl-CoA thioesterase of Pseudomonas sp. (strain CBS-3).